The primary structure comprises 260 residues: Adenosylcobinamide-GDP ribazoletransferase (260 aa).

Helical transmembrane passes span 40–60 (AFPF…LLLL), 64–84 (ADPL…TGAL), 117–137 (YGAI…AVIA), 142–162 (PLTA…AIAW), 188–208 (QFAL…AFGL), and 209–229 (RPLV…TAFI).

Belongs to the CobS family. Requires Mg(2+) as cofactor.

It localises to the cell inner membrane. It catalyses the reaction alpha-ribazole + adenosylcob(III)inamide-GDP = adenosylcob(III)alamin + GMP + H(+). The enzyme catalyses alpha-ribazole 5'-phosphate + adenosylcob(III)inamide-GDP = adenosylcob(III)alamin 5'-phosphate + GMP + H(+). It functions in the pathway cofactor biosynthesis; adenosylcobalamin biosynthesis; adenosylcobalamin from cob(II)yrinate a,c-diamide: step 7/7. In terms of biological role, joins adenosylcobinamide-GDP and alpha-ribazole to generate adenosylcobalamin (Ado-cobalamin). Also synthesizes adenosylcobalamin 5'-phosphate from adenosylcobinamide-GDP and alpha-ribazole 5'-phosphate. This Rhizobium johnstonii (strain DSM 114642 / LMG 32736 / 3841) (Rhizobium leguminosarum bv. viciae) protein is Adenosylcobinamide-GDP ribazoletransferase.